A 46-amino-acid chain; its full sequence is Ligatoxin-B (46 aa).

Disulfide bonds link Cys-3–Cys-40, Cys-4–Cys-32, and Cys-16–Cys-26.

It belongs to the plant thionin (TC 1.C.44) family.

Its subcellular location is the secreted. Functionally, thionins are small plant proteins which are toxic to animal cells. They seem to exert their toxic effect at the level of the cell membrane. Their precise function is not known. The sequence is that of Ligatoxin-B from Phoradendron liga (Argentine mistletoe).